Here is a 345-residue protein sequence, read N- to C-terminus: MKALVKAKREEGIWMQHDVPVPEVGVHDVMIKVTKSAICGTDVHIYNWDEWSQKTVPVPMVVGHEYVGRVEKVGAEVEAFRPGERVSGEGHVTCGFCRNCRAGRRHLCRHTVGVGVNRPGSFAEYVVIPADNVYRIPDDIPDDIAAIFDPFGNATHTALSFDLVGEDVLVTGAGPIGVMAAAIARHVGARHVVVTDVNDYRLDLARRMGASRAVNVAKEDLRAVMSELGMREGFDVGLEMSGNGRAFRQLLEVMNHGGKVALLGIMAGPEPVDWSQVVFKGLQLKGVYGREMYETWYKMVAMLQSGLDLSAVVTHRFSIDDFQQGFDVMRSGRSGKVVLDWGAAR.

Position 39 (cysteine 39) interacts with Zn(2+). Catalysis depends on charge relay system residues threonine 41 and histidine 44. Positions 64, 65, 94, 97, 100, and 108 each coordinate Zn(2+). Residues isoleucine 176, aspartate 196, arginine 201, 263–265 (LGI), and 287–288 (VY) each bind NAD(+).

The protein belongs to the zinc-containing alcohol dehydrogenase family. As to quaternary structure, homotetramer. Requires Zn(2+) as cofactor.

It localises to the cytoplasm. It catalyses the reaction L-threonine + NAD(+) = (2S)-2-amino-3-oxobutanoate + NADH + H(+). Its pathway is amino-acid degradation; L-threonine degradation via oxydo-reductase pathway; glycine from L-threonine: step 1/2. Its function is as follows. Catalyzes the NAD(+)-dependent oxidation of L-threonine to 2-amino-3-ketobutyrate. This is L-threonine 3-dehydrogenase from Anaeromyxobacter sp. (strain K).